Reading from the N-terminus, the 88-residue chain is UPF0335 protein NGR_c28390 (88 aa).

This sequence belongs to the UPF0335 family.

The sequence is that of UPF0335 protein NGR_c28390 from Sinorhizobium fredii (strain NBRC 101917 / NGR234).